The following is a 326-amino-acid chain: Dolichyl-phosphate beta-glucosyltransferase (326 aa).

Residues 1–7 are Lumenal-facing; that stretch reads MWTCLCQ. The helical transmembrane segment at 8 to 28 threads the bilayer; the sequence is LCFYLLSTLAVAALSIAALVL. The Cytoplasmic segment spans residues 29–326; it reads YKTKPYPNIK…RIASIQKKEK (298 aa).

The protein belongs to the glycosyltransferase 2 family.

It localises to the endoplasmic reticulum membrane. It catalyses the reaction a di-trans,poly-cis-dolichyl phosphate + UDP-alpha-D-glucose = a di-trans,poly-cis-dolichyl beta-D-glucosyl phosphate + UDP. It participates in protein modification; protein glycosylation. Required for normal production of N-glycosylated proteins in the endoplasmic reticulum (ER). Required for embryonic segmentation, dorsal-ventral patterning and gastrulation. Required for chitin orientation and shaping of the apical and lateral plasma membranes of epidermal cells during cuticle differentiation. Also required for correctly shaping apical membrane topology of the epithelia of other organs such as the midgut and the hindgut. The chain is Dolichyl-phosphate beta-glucosyltransferase (wol) from Drosophila melanogaster (Fruit fly).